A 336-amino-acid polypeptide reads, in one-letter code: tRNA N6-adenosine threonylcarbamoyltransferase (336 aa).

His-110 and His-114 together coordinate Fe cation. Residues Leu-133–Lys-137, Asp-166, Gly-179, and Asn-271 each bind substrate. Position 300 (Asp-300) interacts with Fe cation.

Belongs to the KAE1 / TsaD family. The cofactor is Fe(2+).

It localises to the cytoplasm. It catalyses the reaction L-threonylcarbamoyladenylate + adenosine(37) in tRNA = N(6)-L-threonylcarbamoyladenosine(37) in tRNA + AMP + H(+). Its function is as follows. Required for the formation of a threonylcarbamoyl group on adenosine at position 37 (t(6)A37) in tRNAs that read codons beginning with adenine. Is involved in the transfer of the threonylcarbamoyl moiety of threonylcarbamoyl-AMP (TC-AMP) to the N6 group of A37, together with TsaE and TsaB. TsaD likely plays a direct catalytic role in this reaction. This is tRNA N6-adenosine threonylcarbamoyltransferase from Buchnera aphidicola subsp. Acyrthosiphon pisum (strain 5A).